Consider the following 265-residue polypeptide: 4-hydroxy-tetrahydrodipicolinate reductase (265 aa).

NAD(+) is bound at residue 9–14; the sequence is GARGKM. Lys37 contributes to the NADP(+) binding site. Residues 99 to 101 and 125 to 128 contribute to the NAD(+) site; these read GTT and APNF. The active-site Proton donor/acceptor is the His155. Residue His156 coordinates (S)-2,3,4,5-tetrahydrodipicolinate. The active-site Proton donor is the Lys159. 165-166 is a (S)-2,3,4,5-tetrahydrodipicolinate binding site; it reads GT.

This sequence belongs to the DapB family.

The protein resides in the cytoplasm. The enzyme catalyses (S)-2,3,4,5-tetrahydrodipicolinate + NAD(+) + H2O = (2S,4S)-4-hydroxy-2,3,4,5-tetrahydrodipicolinate + NADH + H(+). It catalyses the reaction (S)-2,3,4,5-tetrahydrodipicolinate + NADP(+) + H2O = (2S,4S)-4-hydroxy-2,3,4,5-tetrahydrodipicolinate + NADPH + H(+). It participates in amino-acid biosynthesis; L-lysine biosynthesis via DAP pathway; (S)-tetrahydrodipicolinate from L-aspartate: step 4/4. Its function is as follows. Catalyzes the conversion of 4-hydroxy-tetrahydrodipicolinate (HTPA) to tetrahydrodipicolinate. The sequence is that of 4-hydroxy-tetrahydrodipicolinate reductase from Lysinibacillus sphaericus (strain C3-41).